The following is a 161-amino-acid chain: M-phase phosphoprotein 6 (161 aa).

Residues K37 and K86 each participate in a glycyl lysine isopeptide (Lys-Gly) (interchain with G-Cter in SUMO2) cross-link. The residue at position 111 (S111) is a Phosphoserine. A Nuclear localization signal motif is present at residues R117–R134. Residues K128, K151, and K154 each participate in a glycyl lysine isopeptide (Lys-Gly) (interchain with G-Cter in SUMO2) cross-link.

This sequence belongs to the MPP6 family. In terms of assembly, associates with the RNA exosome complex, mediated by EXOSC3. Interacts with ARHGAP18. Interacts with exosome cofactors EXOSC10 and MTREX. Post-translationally, phosphorylated in M (mitotic) phase.

The protein resides in the nucleus. It is found in the nucleolus. The protein localises to the cytoplasm. RNA-binding protein that associates with the RNA exosome complex. Involved in the 3'-processing of the 7S pre-RNA to the mature 5.8S rRNA and plays a role in recruiting the RNA exosome complex to pre-rRNA; this function may include C1D. This Mus musculus (Mouse) protein is M-phase phosphoprotein 6.